A 50-amino-acid chain; its full sequence is Large ribosomal subunit protein bL33 (50 aa).

It belongs to the bacterial ribosomal protein bL33 family.

The polypeptide is Large ribosomal subunit protein bL33 (Citrifermentans bemidjiense (strain ATCC BAA-1014 / DSM 16622 / JCM 12645 / Bem) (Geobacter bemidjiensis)).